The primary structure comprises 314 residues: Homoserine kinase (314 aa).

ATP is bound at residue 95-105 (PHSRGLGSSAS).

It belongs to the GHMP kinase family. Homoserine kinase subfamily.

The protein resides in the cytoplasm. The catalysed reaction is L-homoserine + ATP = O-phospho-L-homoserine + ADP + H(+). It participates in amino-acid biosynthesis; L-threonine biosynthesis; L-threonine from L-aspartate: step 4/5. In terms of biological role, catalyzes the ATP-dependent phosphorylation of L-homoserine to L-homoserine phosphate. In Rhodococcus opacus (strain B4), this protein is Homoserine kinase.